Reading from the N-terminus, the 91-residue chain is Tachykinin-like peptide (91 aa).

Residues 1–19 (MKILVAFAVIMLVSAQVLA) form the signal peptide. Residues 20-51 (AEIGLNDEPEWYSDQIQEDLPVFENFLQRIAR) constitute a propeptide that is removed on maturation. Met-62 carries the methionine amide modification. A disordered region spans residues 64 to 91 (KRNNGFGQMSRKRSAERNTIHNYERRRK). The propeptide occupies 66-91 (NNGFGQMSRKRSAERNTIHNYERRRK). Residues 76–91 (RSAERNTIHNYERRRK) show a composition bias toward basic and acidic residues.

As to expression, expressed by the skin glands.

The protein localises to the secreted. Its function is as follows. Tachykinins are active peptides which excite neurons, evoke behavioral responses, are potent vasodilators and secretagogues, and contract (directly or indirectly) many smooth muscles. In vitro, induces contraction of guinea pig ileum smooth muscle in a dose-dependent manner. The sequence is that of Tachykinin-like peptide from Theloderma corticale (Kwangsi warty tree frog).